The primary structure comprises 206 residues: Small ribosomal subunit protein eS8 (206 aa).

The segment at 1 to 37 (MGISRDSRHKRSATGAKRAQFRKKRKFELGRQPANTK) is disordered.

The protein belongs to the eukaryotic ribosomal protein eS8 family. Component of the small ribosomal subunit. Mature ribosomes consist of a small (40S) and a large (60S) subunit. The 40S subunit contains about 32 different proteins and 1 molecule of RNA (18S). The 60S subunit contains 45 different proteins and 3 molecules of RNA (25S, 5.8S and 5S).

The protein localises to the cytoplasm. Functionally, component of the ribosome, a large ribonucleoprotein complex responsible for the synthesis of proteins in the cell. The small ribosomal subunit (SSU) binds messenger RNAs (mRNAs) and translates the encoded message by selecting cognate aminoacyl-transfer RNA (tRNA) molecules. The large subunit (LSU) contains the ribosomal catalytic site termed the peptidyl transferase center (PTC), which catalyzes the formation of peptide bonds, thereby polymerizing the amino acids delivered by tRNAs into a polypeptide chain. The nascent polypeptides leave the ribosome through a tunnel in the LSU and interact with protein factors that function in enzymatic processing, targeting, and the membrane insertion of nascent chains at the exit of the ribosomal tunnel. In Candida albicans (strain SC5314 / ATCC MYA-2876) (Yeast), this protein is Small ribosomal subunit protein eS8 (RPS8A).